The chain runs to 456 residues: Cell adhesion molecule 1 (456 aa).

The signal sequence occupies residues 1 to 47 (MASAVLPSGSQCAAAAAVAAAAAPPGLRLRLLLLLLSAAALIPTGDG). Residues 48–142 (QNLFTKDVTV…PPQESYTTIT (95 aa)) enclose the Ig-like V-type domain. At 48 to 388 (QNLFTKDVTV…EEGTIGAVDH (341 aa)) the chain is on the extracellular side. An intrachain disulfide couples C67 to C127. N70, N104, N116, and N168 each carry an N-linked (GlcNAc...) asparagine glycan. 2 consecutive Ig-like C2-type domains span residues 147 to 241 (PRNL…RYLE) and 246 to 332 (PQVH…YMLY). 2 disulfide bridges follow: C169–C223 and C270–C316. N-linked (GlcNAc...) asparagine glycosylation is found at N307 and N311. The helical transmembrane segment at 389–409 (AVIGGVVAVVVFAMLCLLIIL) threads the bilayer. Residues 410 to 456 (GRYFARHKGTYFTHEAKGADDAADADTAIINAEGGQNNSEEKKEYFI) are Cytoplasmic-facing. A Phosphothreonine modification is found at T436. Residue S448 is modified to Phosphoserine.

This sequence belongs to the nectin family. As to quaternary structure, homodimer (via Ig-like V-type domain). Interacts with FARP1. Interacts (via Ig-like V-type domain) with CRTAM (via Ig-like V-type domain); the interaction competes with CRTAM homodimerization and CADM1 homodimerization. Interacts (via C-terminus) with EPB41L3/DAL1. The interaction with EPB41L3/DAL1 may act to anchor CADM1 to the actin cytoskeleton. Interacts (via C-terminus) with MPP2 (via PDZ domain). Interacts (via C-terminus) with MPP3 (via PDZ domain); this interaction connects CADM1 with DLG1. Interacts (via C-terminus) with PALS2 (via PDZ domain). N-glycosylated. Post-translationally, glycosylation at Asn-70 and Asn-104 promotes adhesive binding and synapse induction. In terms of tissue distribution, expressed dominantly in epithelial cells but not expressed in fibroblast cells (at protein level). Expressed in the T-cell area of lymph nodes, specifically in CD8+ and CD4- CD8- dendritic cells (at protein level). Expressed in CD8+ dendritic cells in the spleen (at protein level). Expressed in CD103+ dendritic cells in the small intestine lamina propria and mesenteric lymph nodes (at protein level). Expressed in brain, lung, kidney, testis, heart, spleen and liver, but not expressed in skeletal muscle.

It localises to the cell membrane. The protein resides in the synaptic cell membrane. Functionally, mediates homophilic cell-cell adhesion in a Ca(2+)-independent manner. Also mediates heterophilic cell-cell adhesion with CADM3 and NECTIN3 in a Ca(2+)-independent manner. Interaction with CRTAM promotes natural killer (NK) cell cytotoxicity and interferon-gamma (IFN-gamma) secretion by CD8+ T-cells in vitro as well as NK cell-mediated rejection of tumors expressing CADM1 in vivo. In mast cells, may mediate attachment to and promote communication with nerves. CADM1, together with MITF, is essential for development and survival of mast cells in vivo. By interacting with CRTAM and thus promoting the adhesion between CD8+ T-cells and CD8+ dendritic cells, regulates the retention of activated CD8+ T-cell within the draining lymph node. Required for the intestinal retention of intraepithelial CD4+ CD8+ T-cells and, to a lesser extent, intraepithelial and lamina propria CD8+ T-cells and CD4+ T-cells. Interaction with CRTAM promotes the adhesion to gut-associated CD103+ dendritic cells, which may facilitate the expression of gut-homing and adhesion molecules on T-cells and the conversion of CD4+ T-cells into CD4+ CD8+ T-cells. Acts as a synaptic cell adhesion molecule and plays a role in the formation of dendritic spines and in synapse assembly. May be involved in neuronal migration, axon growth, pathfinding, and fasciculation on the axons of differentiating neurons. May play diverse roles in the spermatogenesis including in the adhesion of spermatocytes and spermatids to Sertoli cells and for their normal differentiation into mature spermatozoa. This Mus musculus (Mouse) protein is Cell adhesion molecule 1.